The primary structure comprises 153 residues: MTPVQRRRLAWVLLALLASGLATALVAMALERNIAYLYTPSEVLRGDVDAQSRFRLGGMVVKGSFNRPVGSLEARFEVTDGDAQLAVTTSRILPDMFAEGTAVVASGRLQDGTFVADEVLAKHDEKYVPKEVADKMGDAHRKHDVPVTAPEVR.

Residues 1–8 (MTPVQRRR) are Cytoplasmic-facing. Residues 9–29 (LAWVLLALLASGLATALVAMA) form a helical; Signal-anchor for type II membrane protein membrane-spanning segment. At 30–153 (LERNIAYLYT…DVPVTAPEVR (124 aa)) the chain is on the extracellular side. 2 residues coordinate heme: histidine 123 and tyrosine 127.

The protein belongs to the CcmE/CycJ family.

The protein resides in the cell membrane. Heme chaperone required for the biogenesis of c-type cytochromes. Transiently binds heme delivered by CcmC and transfers the heme to apo-cytochromes in a process facilitated by CcmF and CcmH. This Stenotrophomonas maltophilia (strain K279a) protein is Cytochrome c-type biogenesis protein CcmE.